Reading from the N-terminus, the 131-residue chain is D-ribose pyranase (131 aa).

Catalysis depends on H20, which acts as the Proton donor. Residues D28, H98, and 120-122 each bind substrate; that span reads FSN.

This sequence belongs to the RbsD / FucU family. RbsD subfamily. In terms of assembly, homodecamer.

It is found in the cytoplasm. It carries out the reaction beta-D-ribopyranose = beta-D-ribofuranose. It functions in the pathway carbohydrate metabolism; D-ribose degradation; D-ribose 5-phosphate from beta-D-ribopyranose: step 1/2. In terms of biological role, catalyzes the interconversion of beta-pyran and beta-furan forms of D-ribose. This chain is D-ribose pyranase, found in Petrotoga mobilis (strain DSM 10674 / SJ95).